A 286-amino-acid polypeptide reads, in one-letter code: 33 kDa chaperonin (286 aa).

2 cysteine pairs are disulfide-bonded: C233-C235 and C267-C270.

It belongs to the HSP33 family. In terms of processing, under oxidizing conditions two disulfide bonds are formed involving the reactive cysteines. Under reducing conditions zinc is bound to the reactive cysteines and the protein is inactive.

It is found in the cytoplasm. In terms of biological role, redox regulated molecular chaperone. Protects both thermally unfolding and oxidatively damaged proteins from irreversible aggregation. Plays an important role in the bacterial defense system toward oxidative stress. This Histophilus somni (strain 129Pt) (Haemophilus somnus) protein is 33 kDa chaperonin.